Consider the following 902-residue polypeptide: Cytosolic 10-formyltetrahydrofolate dehydrogenase (902 aa).

Residues 1–310 (MKIAVIGQSL…LASNFFKGAA (310 aa)) form a hydrolase domain region. Serine 9 is modified (phosphoserine). An N6-succinyllysine modification is found at lysine 38. 88-90 (QFI) serves as a coordination point for (6R)-10-formyltetrahydrofolate. Histidine 106 acts as the Proton donor in catalysis. Residue aspartate 142 participates in (6R)-10-formyltetrahydrofolate binding. The Carrier domain occupies 318-395 (EAELVTAEAV…DFIQLLVRKL (78 aa)). The residue at position 354 (serine 354) is an O-(pantetheine 4'-phosphoryl)serine. An aldehyde dehydrogenase domain region spans residues 417–902 (TIRIPHQLFI…LRVKTVTFEY (486 aa)). NADP(+) contacts are provided by residues 571-573 (IPW) and 597-600 (KPAQ). 2 positions are modified to phosphoserine: serine 629 and serine 631. NADP(+) contacts are provided by residues 630-635 (GSLVGQ) and 650-651 (GS). N6-succinyllysine is present on lysine 660. Glutamate 673 serves as the catalytic Proton acceptor. 673–674 (EL) provides a ligand contact to NADP(+). Catalysis depends on cysteine 707, which acts as the Proton donor. Lysine 757 serves as a coordination point for NADP(+). Residue lysine 767 is modified to N6-succinyllysine. Position 804-806 (804-806 (ESF)) interacts with NADP(+). Serine 825 is subject to Phosphoserine. At lysine 882 the chain carries N6-acetyllysine.

In the N-terminal section; belongs to the GART family. It in the C-terminal section; belongs to the aldehyde dehydrogenase family. ALDH1L subfamily. In terms of assembly, homotetramer. In terms of processing, phosphopantetheinylation at Ser-354 by AASDHPPT is required for the formyltetrahydrofolate dehydrogenase activity.

The protein resides in the cytoplasm. Its subcellular location is the cytosol. The catalysed reaction is (6R)-10-formyltetrahydrofolate + NADP(+) + H2O = (6S)-5,6,7,8-tetrahydrofolate + CO2 + NADPH + H(+). Functionally, cytosolic 10-formyltetrahydrofolate dehydrogenase that catalyzes the NADP(+)-dependent conversion of 10-formyltetrahydrofolate to tetrahydrofolate and carbon dioxide. May also have an NADP(+)-dependent aldehyde dehydrogenase activity towards formaldehyde, acetaldehyde, propionaldehyde, and benzaldehyde. This chain is Cytosolic 10-formyltetrahydrofolate dehydrogenase, found in Pongo abelii (Sumatran orangutan).